We begin with the raw amino-acid sequence, 688 residues long: Elongation factor G (688 aa).

Positions 8–282 constitute a tr-type G domain; the sequence is INFRNFGIMA…AVVDFLPSPV (275 aa). Residues 17–24, 81–85, and 135–138 each bind GTP; these read AHIDAGKT, DTPGH, and NKMD.

Belongs to the TRAFAC class translation factor GTPase superfamily. Classic translation factor GTPase family. EF-G/EF-2 subfamily.

It localises to the cytoplasm. Its function is as follows. Catalyzes the GTP-dependent ribosomal translocation step during translation elongation. During this step, the ribosome changes from the pre-translocational (PRE) to the post-translocational (POST) state as the newly formed A-site-bound peptidyl-tRNA and P-site-bound deacylated tRNA move to the P and E sites, respectively. Catalyzes the coordinated movement of the two tRNA molecules, the mRNA and conformational changes in the ribosome. The protein is Elongation factor G (fusA) of Mycoplasma pneumoniae (strain ATCC 29342 / M129 / Subtype 1) (Mycoplasmoides pneumoniae).